The chain runs to 245 residues: MDAISSLGTNCVLSGVSPFSQENQSKSKLSPFMSLDLKEHPMASADFTNQTLTAFSSSSASPFQAKTSSIGMSRGMRWWEKSTNHNMLEIQSANHLVDSLLNAGDRLVVLDFYSPGCGGCKSLHPKICQLAETNPNVMFLKVNQEELRTMCHGLNVHVLPFFKFYRGAEGKVCSFSCTIATINKFKKALDKHGSERCSLGDAKGLDEKELAALASVGELKMNSLTMHQASNIGYKTEEQYQTMVL.

The N-terminal 92 residues, 1 to 92 (MDAISSLGTN…TNHNMLEIQS (92 aa)), are a transit peptide targeting the chloroplast. One can recognise a Thioredoxin domain in the interval 93 to 194 (ANHLVDSLLN…FKKALDKHGS (102 aa)). Catalysis depends on nucleophile residues cysteine 117 and cysteine 120. A disulfide bond links cysteine 117 and cysteine 120.

This sequence belongs to the thioredoxin family.

It localises to the plastid. It is found in the chloroplast. Its function is as follows. Probable thiol-disulfide oxidoreductase that may participate in various redox reactions. The chain is Thioredoxin-like 1-2, chloroplastic from Arabidopsis thaliana (Mouse-ear cress).